We begin with the raw amino-acid sequence, 32 residues long: Cytochrome b6-f complex subunit 7 (32 aa).

Residues 9–27 (AAVFWVLIPVGLLGGAILL) form a helical membrane-spanning segment.

Belongs to the PetM family. In terms of assembly, the 4 large subunits of the cytochrome b6-f complex are cytochrome b6, subunit IV (17 kDa polypeptide, PetD), cytochrome f and the Rieske protein, while the 4 small subunits are PetG, PetL, PetM and PetN. The complex functions as a dimer.

It localises to the cellular thylakoid membrane. Functionally, component of the cytochrome b6-f complex, which mediates electron transfer between photosystem II (PSII) and photosystem I (PSI), cyclic electron flow around PSI, and state transitions. The protein is Cytochrome b6-f complex subunit 7 of Prochlorococcus marinus (strain MIT 9211).